The following is a 1551-amino-acid chain: Pentafunctional AROM polypeptide (1551 aa).

A 3-dehydroquinate synthase region spans residues 1-379 (MSIEKVPILG…YQLKAHQVSK (379 aa)). NAD(+)-binding positions include 42–44 (DTN), 80–83 (ENNK), 111–113 (GGV), and aspartate 116. Arginine 127 is a 7-phospho-2-dehydro-3-deoxy-D-arabino-heptonate binding site. Residue 136-137 (TT) coordinates NAD(+). Positions 143 and 149 each coordinate 7-phospho-2-dehydro-3-deoxy-D-arabino-heptonate. Lysine 158 provides a ligand contact to NAD(+). Residue asparagine 159 participates in 7-phospho-2-dehydro-3-deoxy-D-arabino-heptonate binding. NAD(+) contacts are provided by residues 176 to 179 (FLET) and asparagine 187. Position 191 (glutamate 191) interacts with Zn(2+). Residues 191–194 (EVVK) and lysine 243 contribute to the 7-phospho-2-dehydro-3-deoxy-D-arabino-heptonate site. Residue glutamate 253 is the Proton acceptor; for 3-dehydroquinate synthase activity of the active site. 7-phospho-2-dehydro-3-deoxy-D-arabino-heptonate-binding positions include 257–261 (RNLLN) and histidine 264. Histidine 264 lines the Zn(2+) pocket. Histidine 268 acts as the Proton acceptor; for 3-dehydroquinate synthase activity in catalysis. The 7-phospho-2-dehydro-3-deoxy-D-arabino-heptonate site is built by histidine 280 and lysine 351. Position 280 (histidine 280) interacts with Zn(2+). The interval 392–838 (VHPFTNPPKE…WDILHSKFKI (447 aa)) is EPSP synthase. The segment at 858-1048 (DKSIIVIGMR…VPAGRSAAVV (191 aa)) is shikimate kinase. An ATP-binding site is contributed by 865–872 (GMRGTGKS). The tract at residues 1049-1258 (LTSPDLNEVV…NDEEFLTIGE (210 aa)) is 3-dehydroquinase. The active-site Schiff-base intermediate with substrate; for 3-dehydroquinate dehydratase activity is arginine 1194. A shikimate dehydrogenase region spans residues 1271–1551 (AKKFWVIGSP…EIIHRAVVEE (281 aa)).

It in the N-terminal section; belongs to the sugar phosphate cyclases superfamily. Dehydroquinate synthase family. This sequence in the 2nd section; belongs to the EPSP synthase family. The protein in the 3rd section; belongs to the shikimate kinase family. In the 4th section; belongs to the type-I 3-dehydroquinase family. It in the C-terminal section; belongs to the shikimate dehydrogenase family. In terms of assembly, homodimer. Requires Zn(2+) as cofactor.

It is found in the cytoplasm. The catalysed reaction is 7-phospho-2-dehydro-3-deoxy-D-arabino-heptonate = 3-dehydroquinate + phosphate. It catalyses the reaction 3-dehydroquinate = 3-dehydroshikimate + H2O. The enzyme catalyses shikimate + NADP(+) = 3-dehydroshikimate + NADPH + H(+). It carries out the reaction shikimate + ATP = 3-phosphoshikimate + ADP + H(+). The catalysed reaction is 3-phosphoshikimate + phosphoenolpyruvate = 5-O-(1-carboxyvinyl)-3-phosphoshikimate + phosphate. The protein operates within metabolic intermediate biosynthesis; chorismate biosynthesis; chorismate from D-erythrose 4-phosphate and phosphoenolpyruvate: step 2/7. Its pathway is metabolic intermediate biosynthesis; chorismate biosynthesis; chorismate from D-erythrose 4-phosphate and phosphoenolpyruvate: step 3/7. It participates in metabolic intermediate biosynthesis; chorismate biosynthesis; chorismate from D-erythrose 4-phosphate and phosphoenolpyruvate: step 4/7. It functions in the pathway metabolic intermediate biosynthesis; chorismate biosynthesis; chorismate from D-erythrose 4-phosphate and phosphoenolpyruvate: step 5/7. The protein operates within metabolic intermediate biosynthesis; chorismate biosynthesis; chorismate from D-erythrose 4-phosphate and phosphoenolpyruvate: step 6/7. Its function is as follows. The AROM polypeptide catalyzes 5 consecutive enzymatic reactions in prechorismate polyaromatic amino acid biosynthesis. This chain is Pentafunctional AROM polypeptide, found in Candida albicans (strain SC5314 / ATCC MYA-2876) (Yeast).